The following is a 371-amino-acid chain: Bifunctional enzyme IspD/IspF (371 aa).

Residues 1-210 form a 2-C-methyl-D-erythritol 4-phosphate cytidylyltransferase region; sequence MSEMSLIMLA…LNLPTPSFEI (210 aa). The tract at residues 211–371 is 2-C-methyl-D-erythritol 2,4-cyclodiphosphate synthase; sequence FTGNGFDVHE…NLKYFDWTRL (161 aa). A divalent metal cation is bound by residues Asp-217 and His-219. 4-CDP-2-C-methyl-D-erythritol 2-phosphate contacts are provided by residues 217-219 and 243-244; these read DVH and HS. An a divalent metal cation-binding site is contributed by His-251. Residues 265 to 267, 270 to 274, 341 to 344, Phe-348, and Arg-351 each bind 4-CDP-2-C-methyl-D-erythritol 2-phosphate; these read DIG, YPDTD, and TTTE.

The protein in the N-terminal section; belongs to the IspD/TarI cytidylyltransferase family. IspD subfamily. It in the C-terminal section; belongs to the IspF family. The cofactor is a divalent metal cation.

It carries out the reaction 2-C-methyl-D-erythritol 4-phosphate + CTP + H(+) = 4-CDP-2-C-methyl-D-erythritol + diphosphate. The catalysed reaction is 4-CDP-2-C-methyl-D-erythritol 2-phosphate = 2-C-methyl-D-erythritol 2,4-cyclic diphosphate + CMP. The protein operates within isoprenoid biosynthesis; isopentenyl diphosphate biosynthesis via DXP pathway; isopentenyl diphosphate from 1-deoxy-D-xylulose 5-phosphate: step 2/6. Its pathway is isoprenoid biosynthesis; isopentenyl diphosphate biosynthesis via DXP pathway; isopentenyl diphosphate from 1-deoxy-D-xylulose 5-phosphate: step 4/6. Functionally, bifunctional enzyme that catalyzes the formation of 4-diphosphocytidyl-2-C-methyl-D-erythritol from CTP and 2-C-methyl-D-erythritol 4-phosphate (MEP) (IspD), and catalyzes the conversion of 4-diphosphocytidyl-2-C-methyl-D-erythritol 2-phosphate (CDP-ME2P) to 2-C-methyl-D-erythritol 2,4-cyclodiphosphate (ME-CPP) with a corresponding release of cytidine 5-monophosphate (CMP) (IspF). This chain is Bifunctional enzyme IspD/IspF, found in Campylobacter jejuni (strain RM1221).